A 551-amino-acid polypeptide reads, in one-letter code: MARSGLDRIDISPQPAKKIARVGGLQHPFVKTDINTINVEHHFIDTLQKTSPNMDCRGMTAGIFIRLSHMYKILTTLESPNDVTYTTPGSTNALFFKTSTQPQEPHPEELASKLTQDDIKRILLTIESETRGQGDNAIWTLLRRNLITASTLKWSVSGPVIPPQWFYHHNTTDTYGDAAAMAFGKTNEPAARAIVEALFIDPADIRTPDHLTPEATTKFFNFDMLNTKSPSLLVGTPRIGTYECGLLIDVRTGLIGASLDVLVCDRDPLTGTLNPHPAETDISFFEIKCRAKYLFDPDDKNNPLGRTYTTLINRPTMANLRDFLYTIKNPCVSFFGPSANPSTREALITDHVEWKRLGFKGGRALTELDAHHLGLNRTISSRVWVFNDPDIQKGTITTIAWATGDTALQIPVFANPRHANFKQIAVQTYVLSGYFPALKLRPFLVTFIGRVRRPHEVGVPLRVDTQAAAIYEYNWPTIPPHCAVPVIAVLTPIEVDVPRVTKILKDTGNNAITSALRSLRWDNLHPAVEEESVDCANGTTSLLRATEKPLL.

Belongs to the herpesviridae alkaline nuclease family. As to quaternary structure, interacts with major DNA-binding protein; this interaction increases the nuclease processivity of the alkaline exonuclease.

The protein localises to the host nucleus. Its subcellular location is the host cytoplasm. In terms of biological role, plays a role in processing non linear or branched viral DNA intermediates in order to promote the production of mature packaged unit-length linear progeny viral DNA molecules. Exhibits endonuclease and exonuclease activities and accepts both double-stranded and single-stranded DNA as substrate. Exonuclease digestion of DNA is in the 5'-&gt; 3' direction and the products are 5'-monophosphate nucleosides. Additionally, forms a recombinase with the major DNA-binding protein, which displays strand exchange activity. This is Alkaline nuclease from Varicella-zoster virus (strain Oka vaccine) (HHV-3).